We begin with the raw amino-acid sequence, 386 residues long: Galactokinase (386 aa).

35–38 (EHTD) is a substrate binding site. Residues S69 and 125-131 (GAGLSSS) each bind ATP. Residues S131 and E163 each coordinate Mg(2+). The Proton acceptor role is filled by D175. Y224 provides a ligand contact to substrate.

The protein belongs to the GHMP kinase family. GalK subfamily.

It localises to the cytoplasm. It carries out the reaction alpha-D-galactose + ATP = alpha-D-galactose 1-phosphate + ADP + H(+). Its pathway is carbohydrate metabolism; galactose metabolism. Functionally, catalyzes the transfer of the gamma-phosphate of ATP to D-galactose to form alpha-D-galactose-1-phosphate (Gal-1-P). This chain is Galactokinase, found in Vibrio parahaemolyticus serotype O3:K6 (strain RIMD 2210633).